The following is a 1730-amino-acid chain: Myosin-7 (1730 aa).

Residues 8 to 56 (TVGSHVWVEDPDDAWIDGEVEEVNSEEITVNCSGKTVVAKLNNVYPKDP) form the Myosin N-terminal SH3-like domain. The Myosin motor domain occupies 61 to 731 (LGVDDMTKLA…QMAEMDAHRA (671 aa)). ATP is bound by residues 155 to 162 (GESGAGKT) and 208 to 216 (NNNSSRFGK). 4 actin-binding regions span residues 494–528 (LIEK…YQTF), 530–553 (NHKR…AGDV), 588–612 (FPPL…KQQL), and 612–634 (LQSL…KPNN). 4 IQ domains span residues 757 to 786 (LQAA…EAAS), 782 to 811 (REAA…SACS), 831 to 850 (RRAT…HQRY), and 853 to 882 (TKKA…AAKE). Residues 883–1224 (TGALQDAKTK…VSDMETAEQI (342 aa)) are a coiled coil. In terms of domain architecture, Dilute spans 1327-1678 (DRIVPVFGSA…ISNLKLLLTN (352 aa)). 2 disordered regions span residues 1367-1387 (QSST…FGRM) and 1456-1520 (DSSV…SSEE). A compositionally biased stretch (low complexity) spans 1456–1465 (DSSVVNSPSK). Basic and acidic residues predominate over residues 1475 to 1508 (SSEENSPKKSSEENSPKESSGDKSPQKLSDDNSP).

The protein belongs to the TRAFAC class myosin-kinesin ATPase superfamily. Myosin family. Plant myosin class XI subfamily. As to quaternary structure, homodimer.

Functionally, myosin heavy chain that is required for the cell cycle-regulated transport of various organelles and proteins for their segregation. Functions by binding with its tail domain to receptor proteins on organelles and exerting force with its N-terminal motor domain against actin filaments, thereby transporting its cargo along polarized actin cables. This Arabidopsis thaliana (Mouse-ear cress) protein is Myosin-7 (XI-A).